The primary structure comprises 117 residues: uncharacterized protein (117 aa).

A helical membrane pass occupies residues L57–V77.

It localises to the membrane. This is an uncharacterized protein from Schizosaccharomyces pombe (strain 972 / ATCC 24843) (Fission yeast).